The chain runs to 231 residues: Isoprenyl transferase (231 aa).

Residue Asp14 is part of the active site. Residue Asp14 coordinates Mg(2+). Substrate-binding positions include 15 to 18, Trp19, Arg27, His31, and 59 to 61; these read GNGR and STE. Asn62 functions as the Proton acceptor in the catalytic mechanism. Substrate-binding positions include Trp63, Arg65, Arg176, and 182–184; that span reads RIS. Glu195 provides a ligand contact to Mg(2+).

This sequence belongs to the UPP synthase family. Homodimer. The cofactor is Mg(2+).

Catalyzes the condensation of isopentenyl diphosphate (IPP) with allylic pyrophosphates generating different type of terpenoids. The sequence is that of Isoprenyl transferase from Aquifex aeolicus (strain VF5).